The sequence spans 297 residues: Pyridoxal 5'-phosphate synthase subunit PdxS (297 aa).

D27 contributes to the D-ribose 5-phosphate binding site. The active-site Schiff-base intermediate with D-ribose 5-phosphate is the K84. G156 lines the D-ribose 5-phosphate pocket. R168 provides a ligand contact to D-glyceraldehyde 3-phosphate. Residues G217 and 238–239 (GS) contribute to the D-ribose 5-phosphate site.

Belongs to the PdxS/SNZ family. As to quaternary structure, in the presence of PdxT, forms a dodecamer of heterodimers.

It catalyses the reaction aldehydo-D-ribose 5-phosphate + D-glyceraldehyde 3-phosphate + L-glutamine = pyridoxal 5'-phosphate + L-glutamate + phosphate + 3 H2O + H(+). It participates in cofactor biosynthesis; pyridoxal 5'-phosphate biosynthesis. Catalyzes the formation of pyridoxal 5'-phosphate from ribose 5-phosphate (RBP), glyceraldehyde 3-phosphate (G3P) and ammonia. The ammonia is provided by the PdxT subunit. Can also use ribulose 5-phosphate and dihydroxyacetone phosphate as substrates, resulting from enzyme-catalyzed isomerization of RBP and G3P, respectively. The polypeptide is Pyridoxal 5'-phosphate synthase subunit PdxS (Corynebacterium efficiens (strain DSM 44549 / YS-314 / AJ 12310 / JCM 11189 / NBRC 100395)).